Reading from the N-terminus, the 820-residue chain is Ribosome biogenesis protein ERB1 (820 aa).

A disordered region spans residues 1–111; the sequence is MVRSRSNSVK…SDAGDDEVDP (111 aa). The segment covering 9 to 19 has biased composition (basic and acidic residues); sequence VKKDLKRKVDE. The segment covering 20–48 has biased composition (acidic residues); it reads PVDVQDEFDVEGLIDEGDSDDEDEAEQEV. The segment covering 53-64 has biased composition (basic and acidic residues); that stretch reads VTKDKKNTSKTE. The span at 65 to 110 shows a compositional bias: acidic residues; sequence NEEDADDESDSDAELEALIGEEEDLSGSELEDELAYFSDAGDDEVD. The interval 282-395 is required for interaction with NOP7; that stretch reads RFIPSKHEAK…LRHVPGYSES (114 aa). The interval 395-431 is required for interaction with YTM1; that stretch reads SVRERFERSLDLYLAPRVRKNKLNIDPDSLIPDLPSP. 2 WD repeats span residues 447-486 and 495-535; these read GHKG…ELYR and AQDD…FDIE. A disordered region spans residues 545-585; the sequence is GWGFAEGGREQQDIDTKGLDDDADSDSDDETGHVKKKSPPA. A compositionally biased stretch (basic and acidic residues) spans 551-564; that stretch reads GGREQQDIDTKGLD. 5 WD repeats span residues 604–646, 649–687, 690–729, 733–773, and 789–820; these read TATK…SQSP, KSKG…MAKK, PGAR…KPYK, YHEK…DMMT, and KSGL…LWTT.

This sequence belongs to the WD repeat BOP1/ERB1 family. In terms of assembly, component of the NOP7 complex, composed of ERB1, NOP7 and YTM1. The complex is held together by ERB1, which interacts with NOP7 via its N-terminal domain and with YTM1 via a high-affinity interaction between the seven-bladed beta-propeller domains of the 2 proteins. The NOP7 complex associates with the 66S pre-ribosome.

The protein localises to the nucleus. Its subcellular location is the nucleolus. The protein resides in the nucleoplasm. Its function is as follows. Component of the NOP7 complex, which is required for maturation of the 25S and 5.8S ribosomal RNAs and formation of the 60S ribosome. The protein is Ribosome biogenesis protein ERB1 of Yarrowia lipolytica (strain CLIB 122 / E 150) (Yeast).